Here is a 511-residue protein sequence, read N- to C-terminus: ATP synthase subunit alpha (511 aa).

169 to 176 (GDRQTGKT) lines the ATP pocket.

This sequence belongs to the ATPase alpha/beta chains family. F-type ATPases have 2 components, CF(1) - the catalytic core - and CF(0) - the membrane proton channel. CF(1) has five subunits: alpha(3), beta(3), gamma(1), delta(1), epsilon(1). CF(0) has three main subunits: a(1), b(2) and c(9-12). The alpha and beta chains form an alternating ring which encloses part of the gamma chain. CF(1) is attached to CF(0) by a central stalk formed by the gamma and epsilon chains, while a peripheral stalk is formed by the delta and b chains.

The protein localises to the cell inner membrane. The catalysed reaction is ATP + H2O + 4 H(+)(in) = ADP + phosphate + 5 H(+)(out). Produces ATP from ADP in the presence of a proton gradient across the membrane. The alpha chain is a regulatory subunit. The sequence is that of ATP synthase subunit alpha from Bartonella quintana (strain Toulouse) (Rochalimaea quintana).